We begin with the raw amino-acid sequence, 283 residues long: Protein/nucleic acid deglycase HchA (283 aa).

3 residues coordinate Zn(2+): His86, Glu91, and His123. Cys185 functions as the Nucleophile in the catalytic mechanism.

The protein belongs to the peptidase C56 family. HchA subfamily. Homodimer.

It is found in the cytoplasm. It catalyses the reaction N(omega)-(1-hydroxy-2-oxopropyl)-L-arginyl-[protein] + H2O = lactate + L-arginyl-[protein] + H(+). It carries out the reaction N(6)-(1-hydroxy-2-oxopropyl)-L-lysyl-[protein] + H2O = lactate + L-lysyl-[protein] + H(+). The catalysed reaction is S-(1-hydroxy-2-oxopropyl)-L-cysteinyl-[protein] + H2O = lactate + L-cysteinyl-[protein] + H(+). The enzyme catalyses N(omega)-(1-hydroxy-2-oxoethyl)-L-arginyl-[protein] + H2O = L-arginyl-[protein] + glycolate + H(+). It catalyses the reaction N(6)-(1-hydroxy-2-oxoethyl)-L-lysyl-[protein] + H2O = glycolate + L-lysyl-[protein] + H(+). It carries out the reaction S-(1-hydroxy-2-oxoethyl)-L-cysteinyl-[protein] + H2O = glycolate + L-cysteinyl-[protein] + H(+). The catalysed reaction is N(2)-(1-hydroxy-2-oxopropyl)-dGTP + H2O = lactate + dGTP + H(+). The enzyme catalyses N(2)-(1-hydroxy-2-oxopropyl)-GTP + H2O = lactate + GTP + H(+). It catalyses the reaction N(2)-(1-hydroxy-2-oxopropyl)-GDP + H2O = lactate + GDP + H(+). It carries out the reaction N(2)-(1-hydroxy-2-oxopropyl)-GMP + H2O = lactate + GMP + H(+). The catalysed reaction is N(2)-(1-hydroxy-2-oxoethyl)-dGTP + H2O = dGTP + glycolate + H(+). The enzyme catalyses N(2)-(1-hydroxy-2-oxoethyl)-GTP + H2O = glycolate + GTP + H(+). It catalyses the reaction N(2)-(1-hydroxy-2-oxoethyl)-GDP + H2O = glycolate + GDP + H(+). It carries out the reaction N(2)-(1-hydroxy-2-oxoethyl)-GMP + H2O = glycolate + GMP + H(+). The catalysed reaction is an N(2)-(1-hydroxy-2-oxopropyl)-guanosine in RNA + H2O = a guanosine in RNA + lactate + H(+). The enzyme catalyses an N(2)-(1-hydroxy-2-oxopropyl)-2'-deoxyguanosine in DNA + H2O = a 2'-deoxyguanosine in DNA + lactate + H(+). It catalyses the reaction an N(2)-(1-hydroxy-2-oxoethyl)-guanosine in RNA + H2O = a guanosine in RNA + glycolate + H(+). It carries out the reaction an N(2)-(1-hydroxy-2-oxoethyl)-2'-deoxyguanosine in DNA + H2O = a 2'-deoxyguanosine in DNA + glycolate + H(+). Its function is as follows. Protein and nucleotide deglycase that catalyzes the deglycation of the Maillard adducts formed between amino groups of proteins or nucleotides and reactive carbonyl groups of glyoxals. Thus, functions as a protein deglycase that repairs methylglyoxal- and glyoxal-glycated proteins, and releases repaired proteins and lactate or glycolate, respectively. Deglycates cysteine, arginine and lysine residues in proteins, and thus reactivates these proteins by reversing glycation by glyoxals. Acts on early glycation intermediates (hemithioacetals and aminocarbinols), preventing the formation of Schiff bases and advanced glycation endproducts (AGE). Also functions as a nucleotide deglycase able to repair glycated guanine in the free nucleotide pool (GTP, GDP, GMP, dGTP) and in DNA and RNA. Is thus involved in a major nucleotide repair system named guanine glycation repair (GG repair), dedicated to reversing methylglyoxal and glyoxal damage via nucleotide sanitization and direct nucleic acid repair. Plays an important role in protecting cells from carbonyl stress. The sequence is that of Protein/nucleic acid deglycase HchA from Escherichia coli O8 (strain IAI1).